The chain runs to 326 residues: Dehydrogenase/reductase SDR family protein 7-like (326 aa).

At 1–17 (MKVQDMDKCAPSSDWNV) the chain is on the cytoplasmic side. A helical; Signal-anchor for type II membrane protein membrane pass occupies residues 18–38 (LYWVLGTVLMPVALPLAIINI). Over 39-326 (WQRFQAQKFR…KLENAEKKST (288 aa)) the chain is Peroxisomal. 57–81 (LITGASSGLGESLAHVFYRAGCRVI) is a binding site for NAD(+). Serine 193 contributes to the substrate binding site. Tyrosine 206 (proton acceptor) is an active-site residue.

Belongs to the short-chain dehydrogenases/reductases (SDR) family.

It localises to the peroxisome membrane. Putative oxidoreductase. This Drosophila melanogaster (Fruit fly) protein is Dehydrogenase/reductase SDR family protein 7-like.